The sequence spans 241 residues: Platelet-derived growth factor subunit B (241 aa).

A signal peptide spans 1-20 (MNRCWALFLSLCCYLRLVSA). Residues 21–81 (EGDPIPEELY…ELESLARGRR (61 aa)) constitute a propeptide, removed in mature form. Residue Asn-63 is glycosylated (N-linked (GlcNAc...) asparagine). Intrachain disulfides connect Cys-97-Cys-141, Cys-130-Cys-178, and Cys-134-Cys-180. Residues 191–241 (RSPGGSQEQRAKTPQTRVTIRTVRVRRPPKGKHRKFKHTHDKTALKETLGA) constitute a propeptide, removed in mature form. Positions 216-230 (RRPPKGKHRKFKHTH) are enriched in basic residues. Positions 216-241 (RRPPKGKHRKFKHTHDKTALKETLGA) are disordered.

It belongs to the PDGF/VEGF growth factor family. In terms of assembly, antiparallel homodimer; disulfide-linked. Antiparallel heterodimer with PDGFA; disulfide-linked. The PDGFB homodimer interacts with PDGFRA and PDGFRB homodimers, and with heterodimers formed by PDGFRA and PDGFRB. The heterodimer composed of PDGFA and PDGFB interacts with PDGFRB homodimers, and with heterodimers formed by PDGFRA and PDGFRB. Interacts with XLKD1. Interacts with LRP1. Interacts with SORL1 (via the N-terminal ectodomain). Interacts with CD82; this interaction inhibits PDGFB-mediated signaling pathway. Expressed at high levels in the heart, brain (sustantia nigra), placenta and fetal kidney. Expressed at moderate levels in the brain (hippocampus), skeletal muscle, kidney and lung.

The protein resides in the secreted. In terms of biological role, growth factor that plays an essential role in the regulation of embryonic development, cell proliferation, cell migration, survival and chemotaxis. Potent mitogen for cells of mesenchymal origin. Required for normal proliferation and recruitment of pericytes and vascular smooth muscle cells in the central nervous system, skin, lung, heart and placenta. Required for normal blood vessel development, and for normal development of kidney glomeruli. Plays an important role in wound healing. Signaling is modulated by the formation of heterodimers with PDGFA. This is Platelet-derived growth factor subunit B (PDGFB) from Homo sapiens (Human).